We begin with the raw amino-acid sequence, 315 residues long: Ribose-phosphate pyrophosphokinase (315 aa).

ATP is bound by residues 41–43 (DGE) and 100–101 (RQ). Mg(2+) contacts are provided by His-134 and Asp-173. Residue Lys-196 is part of the active site. D-ribose 5-phosphate contacts are provided by residues Arg-198, Asp-222, and 226–230 (DTAGT).

This sequence belongs to the ribose-phosphate pyrophosphokinase family. Class I subfamily. In terms of assembly, homohexamer. It depends on Mg(2+) as a cofactor.

Its subcellular location is the cytoplasm. The catalysed reaction is D-ribose 5-phosphate + ATP = 5-phospho-alpha-D-ribose 1-diphosphate + AMP + H(+). The protein operates within metabolic intermediate biosynthesis; 5-phospho-alpha-D-ribose 1-diphosphate biosynthesis; 5-phospho-alpha-D-ribose 1-diphosphate from D-ribose 5-phosphate (route I): step 1/1. In terms of biological role, involved in the biosynthesis of the central metabolite phospho-alpha-D-ribosyl-1-pyrophosphate (PRPP) via the transfer of pyrophosphoryl group from ATP to 1-hydroxyl of ribose-5-phosphate (Rib-5-P). The sequence is that of Ribose-phosphate pyrophosphokinase from Bacillus caldolyticus.